Consider the following 524-residue polypeptide: GMP synthase [glutamine-hydrolyzing] (524 aa).

In terms of domain architecture, Glutamine amidotransferase type-1 spans Lys-5–Thr-195. The Nucleophile role is filled by Cys-82. Residues His-169 and Glu-171 contribute to the active site. In terms of domain architecture, GMPS ATP-PPase spans Trp-196–Arg-389. Ser-223–Ser-229 contacts ATP.

Homodimer.

The enzyme catalyses XMP + L-glutamine + ATP + H2O = GMP + L-glutamate + AMP + diphosphate + 2 H(+). It participates in purine metabolism; GMP biosynthesis; GMP from XMP (L-Gln route): step 1/1. Functionally, catalyzes the synthesis of GMP from XMP. The polypeptide is GMP synthase [glutamine-hydrolyzing] (Agathobacter rectalis (strain ATCC 33656 / DSM 3377 / JCM 17463 / KCTC 5835 / VPI 0990) (Eubacterium rectale)).